Reading from the N-terminus, the 299-residue chain is MIKETDLENIPDLLIKFNEPLSNYTYTKVGGPADILAFPATIEALTELSAKAKATDTPVTVLGNASNLIVRDGGIRGVVILLEKLDSVKVAGYTIEAQAGAKLKEVTQVAQANSLTGFEFACGIPGSIGGAVFMNAGAYGGEIYQVLVSCKVMDAAGNVSVLSASEMQFGYRHSVIRDKNLIVLSAKFELQAGDPTQIQNEMDRLNFLRESKQPLEYPSCGSVFKRPVGHFAGQLIQEAKLQGQRIGGVEVSKKHAGFMVNVADGNATDYEKLIALVIEKVKENSGVTLEPEVRIIGEK.

An FAD-binding PCMH-type domain is found at 28–193 (KVGGPADILA…LSAKFELQAG (166 aa)). Arg-172 is a catalytic residue. Ser-222 serves as the catalytic Proton donor. Glu-292 is an active-site residue.

Belongs to the MurB family. Requires FAD as cofactor.

It is found in the cytoplasm. The enzyme catalyses UDP-N-acetyl-alpha-D-muramate + NADP(+) = UDP-N-acetyl-3-O-(1-carboxyvinyl)-alpha-D-glucosamine + NADPH + H(+). The protein operates within cell wall biogenesis; peptidoglycan biosynthesis. Its function is as follows. Cell wall formation. In Lactococcus lactis subsp. cremoris (strain SK11), this protein is UDP-N-acetylenolpyruvoylglucosamine reductase.